We begin with the raw amino-acid sequence, 284 residues long: Probable palmitoyltransferase ZDHHC24 (284 aa).

The Cytoplasmic portion of the chain corresponds to 1–18 (MGQPWAAGSTDGAPAQLP). Residues 19 to 39 (LVLTALWAAAVGLELAYVLVL) form a helical membrane-spanning segment. At 40–52 (GPGPPPLGPLARA) the chain is on the extracellular side. The helical transmembrane segment at 53 to 73 (LQLALAAFQLLNLLGNVGLFL) threads the bilayer. At 74–137 (RSDPSIRGVM…GRCVGFGNYR (64 aa)) the chain is on the cytoplasmic side. The DHHC domain maps to 94–144 (AYCYQCQSQVPPRSGHCSACRVCILRRDHHCRLLGRCVGFGNYRPFLCLLL). Cysteine 124 functions as the S-palmitoyl cysteine intermediate in the catalytic mechanism. Residues 138–158 (PFLCLLLHAAGVLLHVSVLLG) traverse the membrane as a helical segment. Over 159–166 (PALSALLR) the chain is Extracellular. The chain crosses the membrane as a helical span at residues 167-187 (AHTPLHMAALLLLPWLMLLTG). Residues 188-201 (RVSLAQFALAFVTD) are Cytoplasmic-facing. A helical transmembrane segment spans residues 202–222 (TCVAGALLCGAGLLFHGMLLL). Residues 223 to 284 (RGQTTWEWAR…TTADVGHTAS (62 aa)) lie on the Extracellular side of the membrane.

The protein belongs to the DHHC palmitoyltransferase family.

It is found in the membrane. The catalysed reaction is L-cysteinyl-[protein] + hexadecanoyl-CoA = S-hexadecanoyl-L-cysteinyl-[protein] + CoA. Probable palmitoyltransferase that could catalyze the addition of palmitate onto various protein substrates. The polypeptide is Probable palmitoyltransferase ZDHHC24 (Homo sapiens (Human)).